A 57-amino-acid chain; its full sequence is Large ribosomal subunit protein bL32 (57 aa).

The protein belongs to the bacterial ribosomal protein bL32 family.

This is Large ribosomal subunit protein bL32 from Geobacillus sp. (strain WCH70).